The sequence spans 420 residues: MGGGGMFEEIGCFDPNAPAEMTAESSFSPSEPPPTITVIGSNSNSNCSLEDLSAFHLSPQDSSLPASASAYAHQLHINATPNCDHQFQSSMHQTLQDPSYAQQSNHWDNGYQDFVNLGPNHTTPDLLSLLQLPRSSLPPFANPSIQDIIMTTSSSVAAYDPLFHLNFPLQPPNGSFMGVDQDQTETNQGVNLMYDEENNNLDDGLNRKGRGSKKRKIFPTERERRVHFKDRFGDLKNLIPNPTKNDRASIVGEAIDYIKELLRTIDEFKLLVEKKRVKQRNREGDDVVDENFKAQSEVVEQCLINKKNNALRCSWLKRKSKFTDVDVRIIDDEVTIKIVQKKKINCLLFVSKVVDQLELDLHHVAGAQIGEHHSFLFNAKISEGSSVYASAIADRVMEVLKKQYMEALSANNGYHCYSSD.

The tract at residues 196–216 is disordered; sequence EENNNLDDGLNRKGRGSKKRK. The span at 207-216 shows a compositional bias: basic residues; the sequence is RKGRGSKKRK. The 50-residue stretch at 212-261 folds into the bHLH domain; that stretch reads SKKRKIFPTERERRVHFKDRFGDLKNLIPNPTKNDRASIVGEAIDYIKEL.

As to quaternary structure, homodimer. In terms of tissue distribution, flowers.

Its subcellular location is the nucleus. This chain is Transcription factor bHLH89 (BHLH89), found in Arabidopsis thaliana (Mouse-ear cress).